The chain runs to 74 residues: Mitochondrial import receptor subunit TOM6 homolog (74 aa).

A compositionally biased stretch (polar residues) spans 1–16 (MASSTVPVSAAGSANE). The disordered stretch occupies residues 1–22 (MASSTVPVSAAGSANETPEIPD). Alanine 2 carries the N-acetylalanine modification.

Belongs to the Tom6 family. As to quaternary structure, forms part of the preprotein translocase complex of the outer mitochondrial membrane (TOM complex) which consists of at least 7 different proteins (TOMM5, TOMM6, TOMM7, TOMM20, TOMM22, TOMM40 and TOMM70).

It localises to the mitochondrion outer membrane. In Homo sapiens (Human), this protein is Mitochondrial import receptor subunit TOM6 homolog (TOMM6).